The chain runs to 241 residues: MIAGVLRRSSLPSRQTLSAALASFNSCISHNLTPATTGASVSSRFTLASSPNSFGIRARNIHIRSEPSMIVPAGIASQGYATVTKDRKNEIKKAKIKISPDNVRPLSRKEIALQKEAAEESTSKIKGTKICIAIRSFVNPEKQAWCLPPHTRKVAMPDTRTLYTVLRSPHVDKKSREQFEMRFKKRFLVIKAQSHELSKKLFWLKRYRILGAQYELQFHCKTRLDMTQVLGNINGSTTNAY.

Residues 1–54 (MIAGVLRRSSLPSRQTLSAALASFNSCISHNLTPATTGASVSSRFTLASSPNSF) constitute a mitochondrion transit peptide.

It belongs to the universal ribosomal protein uS10 family. In terms of assembly, component of the mitochondrial ribosome small subunit.

It localises to the mitochondrion. The polypeptide is Small ribosomal subunit protein uS10m (RPS10) (Arabidopsis thaliana (Mouse-ear cress)).